A 397-amino-acid polypeptide reads, in one-letter code: T-box transcription factor TBX19 (397 aa).

Positions 48–216 (LWQRFREVTN…YNPFAKAFLD (169 aa)) form a DNA-binding region, T-box. Positions 220–248 (RNHPKDAPEAASEGQHMTYSHSPQAPHGC) are disordered.

It is found in the nucleus. In terms of biological role, may be involved in the initial formation of the chordamesoderm. This Gallus gallus (Chicken) protein is T-box transcription factor TBX19.